Here is a 318-residue protein sequence, read N- to C-terminus: tRNA-modifying protein YgfZ (318 aa).

Positions 28 and 182 each coordinate folate.

This sequence belongs to the tRNA-modifying YgfZ family.

It localises to the cytoplasm. Its function is as follows. Folate-binding protein involved in regulating the level of ATP-DnaA and in the modification of some tRNAs. It is probably a key factor in regulatory networks that act via tRNA modification, such as initiation of chromosomal replication. This chain is tRNA-modifying protein YgfZ, found in Aliivibrio fischeri (strain MJ11) (Vibrio fischeri).